The following is a 20-amino-acid chain: FLAKKVAKKLVSHVAQKQLE.

A Glutamic acid 1-amide modification is found at Glu20.

As to expression, expressed by the venom gland.

The protein resides in the secreted. This Cupiennius salei (American wandering spider) protein is Short cationic peptide-4b.